A 443-amino-acid chain; its full sequence is Ribosomal protein uS12 methylthiotransferase RimO (443 aa).

Positions 6-116 (PRVGMISLGC…VVNAVHDVVP (111 aa)) constitute an MTTase N-terminal domain. [4Fe-4S] cluster is bound by residues Cys-15, Cys-51, Cys-80, Cys-149, Cys-153, and Cys-156. The Radical SAM core domain occupies 135-373 (LTPRHYAYLK…MAHQQAISAA (239 aa)). In terms of domain architecture, TRAM spans 376-443 (QMKIGKEIEV…DEYDLWAEML (68 aa)).

Belongs to the methylthiotransferase family. RimO subfamily. [4Fe-4S] cluster is required as a cofactor.

Its subcellular location is the cytoplasm. The enzyme catalyses L-aspartate(89)-[ribosomal protein uS12]-hydrogen + (sulfur carrier)-SH + AH2 + 2 S-adenosyl-L-methionine = 3-methylsulfanyl-L-aspartate(89)-[ribosomal protein uS12]-hydrogen + (sulfur carrier)-H + 5'-deoxyadenosine + L-methionine + A + S-adenosyl-L-homocysteine + 2 H(+). Catalyzes the methylthiolation of an aspartic acid residue of ribosomal protein uS12. The polypeptide is Ribosomal protein uS12 methylthiotransferase RimO (Pseudomonas syringae pv. tomato (strain ATCC BAA-871 / DC3000)).